The chain runs to 258 residues: Insulin-like growth factor-binding protein 4 (258 aa).

Positions 1 to 21 are cleaved as a signal peptide; the sequence is MLSLCLMAALLLAAGPGPSLG. Positions 23 to 103 constitute an IGFBP N-terminal domain; that stretch reads EAIHCPPCSE…VHGQGVCMEL (81 aa). 6 disulfides stabilise this stretch: Cys-27–Cys-53, Cys-30–Cys-55, Cys-38–Cys-56, Cys-44–Cys-59, Cys-67–Cys-80, and Cys-74–Cys-100. Asn-125 carries an N-linked (GlcNAc...) asparagine glycan. Disulfide bonds link Cys-131–Cys-138, Cys-174–Cys-204, Cys-215–Cys-226, and Cys-228–Cys-249. One can recognise a Thyroglobulin type-1 domain in the interval 171–249; the sequence is QGSCQSELHR…GLEPKGELDC (79 aa). A Phosphoserine modification is found at Ser-255.

Binds IGF2 more than IGF1.

The protein localises to the secreted. In terms of biological role, IGF-binding proteins prolong the half-life of the IGFs and have been shown to either inhibit or stimulate the growth promoting effects of the IGFs on cell culture. They alter the interaction of IGFs with their cell surface receptors. The protein is Insulin-like growth factor-binding protein 4 (IGFBP4) of Bos taurus (Bovine).